The sequence spans 471 residues: Maintenance of mitochondrial morphology protein 1 (471 aa).

Over 1 to 21 the chain is Lumenal; that stretch reads MSSPQNTSCPPSQHSLSFTQG. The helical transmembrane segment at 22-42 threads the bilayer; sequence LLLGQLSVVLLIGAFIKFFIF. The Cytoplasmic portion of the chain corresponds to 43–471; that stretch reads GESPSSSSRG…GSLPGAPAVA (429 aa). Positions 128-370 constitute an SMP-LTD domain; sequence QPESLDWFNV…EPRVQLVALP (243 aa). 3 disordered regions span residues 271–306, 395–415, and 448–471; these read GTTESSPHLPHPENQNESKPSRQDPEIPTNKDGVRS, EDPATKATHSGFTPVNANRDG, and RGDTQSVGEQLRIPGSLPGAPAVA. Basic and acidic residues predominate over residues 280–295; it reads PHPENQNESKPSRQDP. Polar residues predominate over residues 401 to 410; the sequence is ATHSGFTPVN.

It belongs to the MMM1 family. As to quaternary structure, homodimer. Component of the ER-mitochondria encounter structure (ERMES) or MDM complex, composed of MMM1, MDM10, MDM12 and MDM34. An MMM1 homodimer associates with one molecule of MDM12 on each side in a pairwise head-to-tail manner, and the SMP-LTD domains of MMM1 and MDM12 generate a continuous hydrophobic tunnel for phospholipid trafficking.

The protein localises to the endoplasmic reticulum membrane. Its function is as follows. Component of the ERMES/MDM complex, which serves as a molecular tether to connect the endoplasmic reticulum (ER) and mitochondria. Components of this complex are involved in the control of mitochondrial shape and protein biogenesis, and function in nonvesicular lipid trafficking between the ER and mitochondria. The MDM12-MMM1 subcomplex functions in the major beta-barrel assembly pathway that is responsible for biogenesis of all outer membrane beta-barrel proteins, and acts in a late step after the SAM complex. The MDM10-MDM12-MMM1 subcomplex further acts in the TOM40-specific pathway after the action of the MDM12-MMM1 complex. Essential for establishing and maintaining the structure of mitochondria and maintenance of mtDNA nucleoids. The sequence is that of Maintenance of mitochondrial morphology protein 1 from Arthroderma otae (strain ATCC MYA-4605 / CBS 113480) (Microsporum canis).